A 378-amino-acid chain; its full sequence is Gibberellin 20 oxidase 2 (378 aa).

Residues Met1–Pro10 are compositionally biased toward polar residues. The disordered stretch occupies residues Met1–Thr26. A compositionally biased stretch (basic and acidic residues) spans Ala11–Gln25. Positions Glu220–Pro320 constitute a Fe2OG dioxygenase domain. 3 residues coordinate Fe cation: His245, Asp247, and His301. Arg311 is a catalytic residue.

The protein belongs to the iron/ascorbate-dependent oxidoreductase family. GA20OX subfamily. Requires Fe(2+) as cofactor. The cofactor is L-ascorbate. As to expression, expressed in inflorescence and developing siliques. Detected in seeds, roots, cotyledons and leaves. In seeds, specifically detected at the rim of the embryo and the outer integument.

It carries out the reaction gibberellin A12 + 2 2-oxoglutarate + 3 O2 + H(+) = gibberellin A9 + 2 succinate + 3 CO2 + 2 H2O. The catalysed reaction is gibberellin A12 + 2-oxoglutarate + O2 = gibberellin A15 + succinate + CO2. The enzyme catalyses gibberellin A15 + 2-oxoglutarate + O2 = gibberellin A24 + succinate + CO2 + H2O. It catalyses the reaction gibberellin A53 + 2-oxoglutarate + O2 = gibberellin A44 + succinate + CO2. It carries out the reaction gibberellin A12 + 3 2-oxoglutarate + 3 O2 = gibberellin A25 + 3 succinate + 3 CO2 + H2O + H(+). It participates in plant hormone biosynthesis; gibberellin biosynthesis. Key oxidase enzyme in the biosynthesis of gibberellin that catalyzes the conversion of GA12 to GA9, via a three-step oxidation at C-20 of the GA skeleton, and GA25 is also formed as a minor product. GA53 is less effectively oxidized than GA12 and is only oxidized one step to GA44. Involved in the promotion of the floral transition, fertility and silique elongation, but plays only a minor role in elongation of seedling organs. Acts redundantly with GA20OX1. The chain is Gibberellin 20 oxidase 2 (GA20OX2) from Arabidopsis thaliana (Mouse-ear cress).